The primary structure comprises 547 residues: ATP synthase subunit alpha (547 aa).

ATP is bound at residue 172-179 (GDRKTGKT).

It belongs to the ATPase alpha/beta chains family. In terms of assembly, F-type ATPases have 2 components, CF(1) - the catalytic core - and CF(0) - the membrane proton channel. CF(1) has five subunits: alpha(3), beta(3), gamma(1), delta(1), epsilon(1). CF(0) has three main subunits: a(1), b(2) and c(9-12). The alpha and beta chains form an alternating ring which encloses part of the gamma chain. CF(1) is attached to CF(0) by a central stalk formed by the gamma and epsilon chains, while a peripheral stalk is formed by the delta and b chains.

The protein localises to the cell membrane. The catalysed reaction is ATP + H2O + 4 H(+)(in) = ADP + phosphate + 5 H(+)(out). In terms of biological role, produces ATP from ADP in the presence of a proton gradient across the membrane. The alpha chain is a regulatory subunit. The sequence is that of ATP synthase subunit alpha from Rhodococcus jostii (strain RHA1).